The following is a 637-amino-acid chain: 1-deoxy-D-xylulose-5-phosphate synthase (637 aa).

Residues histidine 76 and 117 to 119 (GHS) each bind thiamine diphosphate. Aspartate 148 contributes to the Mg(2+) binding site. Residues 149-150 (GA), asparagine 177, tyrosine 294, and glutamate 381 each bind thiamine diphosphate. A Mg(2+)-binding site is contributed by asparagine 177.

It belongs to the transketolase family. DXPS subfamily. In terms of assembly, homodimer. Mg(2+) is required as a cofactor. Thiamine diphosphate serves as cofactor.

It carries out the reaction D-glyceraldehyde 3-phosphate + pyruvate + H(+) = 1-deoxy-D-xylulose 5-phosphate + CO2. It functions in the pathway metabolic intermediate biosynthesis; 1-deoxy-D-xylulose 5-phosphate biosynthesis; 1-deoxy-D-xylulose 5-phosphate from D-glyceraldehyde 3-phosphate and pyruvate: step 1/1. Catalyzes the acyloin condensation reaction between C atoms 2 and 3 of pyruvate and glyceraldehyde 3-phosphate to yield 1-deoxy-D-xylulose-5-phosphate (DXP). The chain is 1-deoxy-D-xylulose-5-phosphate synthase from Neisseria meningitidis serogroup B (strain ATCC BAA-335 / MC58).